Consider the following 412-residue polypeptide: Peptidase T (412 aa).

Residue His-78 coordinates Zn(2+). Asp-80 is an active-site residue. A Zn(2+)-binding site is contributed by Asp-140. The active-site Proton acceptor is the Glu-174. Positions 175, 197, and 379 each coordinate Zn(2+).

Belongs to the peptidase M20B family. Requires Zn(2+) as cofactor.

It localises to the cytoplasm. It catalyses the reaction Release of the N-terminal residue from a tripeptide.. Cleaves the N-terminal amino acid of tripeptides. In Staphylococcus epidermidis (strain ATCC 12228 / FDA PCI 1200), this protein is Peptidase T.